Reading from the N-terminus, the 98-residue chain is Feather keratin 2 (98 aa).

N-acetylserine is present on S2.

This sequence belongs to the avian keratin family. The avian keratins (F-ker, S-ker, C-ker and B-ker) are a complex mixture of very similar polypeptides.

This Gallus gallus (Chicken) protein is Feather keratin 2.